A 335-amino-acid polypeptide reads, in one-letter code: Probable geranylgeranyl transferase type-2 subunit beta (335 aa).

PFTB repeat units follow at residues 74-115 (TEEI…IIFN), 122-163 (ADTI…HLLG), 170-211 (IDSA…AIAG), 218-259 (RDRT…AILG), and 266-312 (SDAM…DDTL). Geranylgeranyl diphosphate contacts are provided by residues 196–198 (HSG) and 238–250 (RPEK…YSWW). Zn(2+) is bound by residues Asp-244, Cys-246, and His-296.

Belongs to the protein prenyltransferase subunit beta family. In terms of assembly, heterodimer of an alpha and a beta subunit. It depends on Zn(2+) as a cofactor.

The catalysed reaction is geranylgeranyl diphosphate + L-cysteinyl-[protein] = S-geranylgeranyl-L-cysteinyl-[protein] + diphosphate. In terms of biological role, catalyzes the transfer of a geranyl-geranyl moiety from geranyl-geranyl pyrophosphate to both cysteines in Rab proteins with an -XXCC, -XCXC and -CCXX C-terminal. This is Probable geranylgeranyl transferase type-2 subunit beta (ggtb-1) from Caenorhabditis elegans.